A 788-amino-acid polypeptide reads, in one-letter code: Protein FAR1-RELATED SEQUENCE 5 (788 aa).

Positions 87–179 constitute an FAR1 domain; the sequence is AFYNSYARRI…VKDHNHELVP (93 aa). The MULE domain maps to 299-395; it reads TVTFDTTYRS…CKWHILKKCQ (97 aa). The segment at 584-616 adopts an SWIM-type zinc-finger fold; it reads FNVLEMRANCSCQMFEFSGIICRHILAVFRVTN. Positions 713–733 are disordered; sequence SSVTGGKHQQEVLAQPEPEDE. A coiled-coil region spans residues 731–768; sequence EDEMDKKINQLRNELELANRKCEAYRTNLLSVLKEMED.

Belongs to the FHY3/FAR1 family. Expressed in hypocotyls, rosette and cauline leaves, inflorescences stems, flowers and siliques.

It localises to the nucleus. In terms of biological role, putative transcription activator involved in regulating light control of development. This is Protein FAR1-RELATED SEQUENCE 5 (FRS5) from Arabidopsis thaliana (Mouse-ear cress).